A 440-amino-acid polypeptide reads, in one-letter code: ATP-dependent protease ATPase subunit HslU (440 aa).

ATP is bound by residues Ile-18, 60–65 (GVGKTE), Asp-253, Glu-318, and Arg-390.

The protein belongs to the ClpX chaperone family. HslU subfamily. A double ring-shaped homohexamer of HslV is capped on each side by a ring-shaped HslU homohexamer. The assembly of the HslU/HslV complex is dependent on binding of ATP.

Its subcellular location is the cytoplasm. Functionally, ATPase subunit of a proteasome-like degradation complex; this subunit has chaperone activity. The binding of ATP and its subsequent hydrolysis by HslU are essential for unfolding of protein substrates subsequently hydrolyzed by HslV. HslU recognizes the N-terminal part of its protein substrates and unfolds these before they are guided to HslV for hydrolysis. The polypeptide is ATP-dependent protease ATPase subunit HslU (Shewanella oneidensis (strain ATCC 700550 / JCM 31522 / CIP 106686 / LMG 19005 / NCIMB 14063 / MR-1)).